The chain runs to 176 residues: Calponin-1 (176 aa).

The 104-residue stretch at 22–125 (PQTERQLRVW…STLIALASQA (104 aa)) folds into the Calponin-homology (CH) domain. A Calponin-like repeat occupies 158–176 (IGLQMGTNKFASQQGMTAY). Thr-164 is subject to Phosphothreonine; by ROCK2. Position 169 is a phosphoserine; by ROCK2 (Ser-169). At Thr-174 the chain carries Phosphothreonine; by ROCK2.

The protein belongs to the calponin family. As to expression, smooth muscle, and tissues containing significant amounts of smooth muscle.

Thin filament-associated protein that is implicated in the regulation and modulation of smooth muscle contraction. It is capable of binding to actin, calmodulin and tropomyosin. The interaction of calponin with actin inhibits the actomyosin Mg-ATPase activity. The sequence is that of Calponin-1 (CNN1) from Meleagris gallopavo (Wild turkey).